The primary structure comprises 801 residues: Na(+)/H(+) antiporter subunit A1 (801 aa).

Transmembrane regions (helical) follow at residues Met-1 to Leu-21, Ile-28 to Leu-48, Leu-79 to Ile-99, Leu-117 to Phe-137, Leu-166 to Pro-186, Pro-206 to Phe-226, Ile-265 to Phe-285, Ile-300 to Ala-320, Phe-337 to Ile-357, Leu-373 to Ser-393, Leu-427 to Ile-447, Ile-472 to Pro-492, Gly-522 to Val-542, Leu-591 to Phe-611, Ile-623 to Lys-643, Leu-646 to Phe-666, Leu-671 to Tyr-691, Leu-707 to Ala-727, and Met-764 to Ile-784.

Belongs to the CPA3 antiporters (TC 2.A.63) subunit A family. May form a heterooligomeric complex that consists of seven subunits: mnhA1, mnhB1, mnhC1, mnhD1, mnhE1, mnhF1 and mnhG1.

It is found in the cell membrane. Mnh complex is a Na(+)/H(+) antiporter involved in Na(+) excretion. The sequence is that of Na(+)/H(+) antiporter subunit A1 (mnhA1) from Staphylococcus aureus (strain Mu3 / ATCC 700698).